The sequence spans 467 residues: Sodium-dependent phosphate transport protein 1 (467 aa).

Residues asparagine 41, asparagine 49, and asparagine 58 are each glycosylated (N-linked (GlcNAc...) asparagine). The next 10 helical transmembrane spans lie at 81–101 (GIIL…VGYF), 119–139 (SVLS…VVVC), 178–198 (FLLG…SLGW), 200–220 (MVFY…FVLF), 257–277 (AILK…FFWS), 301–321 (GFLS…AGQL), 339–359 (LFTA…PYLS), 365–385 (IVIF…GVFI), 401–421 (CSTL…GLIL), and 433–453 (FILM…VATA).

Belongs to the major facilitator superfamily. Sodium/anion cotransporter family. As to quaternary structure, interacts with PDZK1. Expressed in kidney cortex, liver and brain but not in other tissues.

Its subcellular location is the apical cell membrane. The catalysed reaction is 3 Na(+)(out) + phosphate(out) = 3 Na(+)(in) + phosphate(in). The enzyme catalyses urate(out) = urate(in). Important for the resorption of phosphate by the kidney. May be involved in actively transporting phosphate into cells via Na(+) cotransport in the renal brush border membrane. Plays a role in urate transport in the kidney. This Homo sapiens (Human) protein is Sodium-dependent phosphate transport protein 1 (SLC17A1).